A 377-amino-acid chain; its full sequence is D-alanine--D-alanine ligase (377 aa).

The ATP-grasp domain maps to 137 to 346; sequence KELMTVNGIR…RSQQAEKLIQ (210 aa). Position 167-222 (167-222) interacts with ATP; sequence SKQLGEVVFVKAANQGSSVGVSRVTNAEEYENALRDSFQYDEKLLVEKAVESPTEL. Residues aspartate 300, glutamate 313, and asparagine 315 each contribute to the Mg(2+) site.

It belongs to the D-alanine--D-alanine ligase family. Mg(2+) is required as a cofactor. The cofactor is Mn(2+).

It is found in the cytoplasm. The enzyme catalyses 2 D-alanine + ATP = D-alanyl-D-alanine + ADP + phosphate + H(+). Its pathway is cell wall biogenesis; peptidoglycan biosynthesis. Cell wall formation. In Oenococcus oeni (strain ATCC BAA-331 / PSU-1), this protein is D-alanine--D-alanine ligase.